A 239-amino-acid polypeptide reads, in one-letter code: MGSGESTTRRVSFGLDEDDRVRILRGVKLSEDVLQRMRNTNADPRPPANNKENQGHQTRTPSTSDAQAPKTQAKTTFPDSKEELKKRYEQQQAIIQEELARIARKEREAARQDISRAVQRERAQTRQESERAKQLGKQLDKKEAELKALEAFYQEQITQLEKKNEERFRMSAEQFHAAATRSEANIKARNVEPVCLNLQAQILNCYRENREQTLQCSDLAKEYMQCINAAKKNLLVNHG.

A lipid anchor (N-myristoyl glycine) is attached at glycine 2. Disordered regions lie at residues 27–88 (VKLS…KKRY) and 113–133 (DISR…ERAK). The segment covering 50 to 78 (NKENQGHQTRTPSTSDAQAPKTQAKTTFP) has biased composition (polar residues). A compositionally biased stretch (basic and acidic residues) spans 79-88 (DSKEELKKRY). The stretch at 79 to 166 (DSKEELKKRY…ITQLEKKNEE (88 aa)) forms a coiled coil. A CHCH domain is found at 192–234 (EPVCLNLQAQILNCYRENREQTLQCSDLAKEYMQCINAAKKNL). Short sequence motifs (cx9C motif) lie at residues 195–205 (CLNLQAQILNC) and 216–226 (CSDLAKEYMQC). Disulfide bonds link cysteine 195-cysteine 226 and cysteine 205-cysteine 216.

It belongs to the MICOS complex subunit Mic19 family. Metazoan Mic25 subfamily. Component of the mitochondrial contact site and cristae organizing system (MICOS) complex (also known as MINOS or MitOS complex).

Its subcellular location is the mitochondrion inner membrane. Functionally, component of the MICOS complex, a large protein complex of the mitochondrial inner membrane that plays crucial roles in the maintenance of crista junctions, inner membrane architecture, and formation of contact sites to the outer membrane. The sequence is that of MICOS complex subunit mic25a (chchd6a) from Danio rerio (Zebrafish).